An 895-amino-acid polypeptide reads, in one-letter code: Probable methyltransferase PMT27 (895 aa).

Over 1–16 the chain is Cytoplasmic; it reads MAFGRGRGNKRTSTSS. A helical; Signal-anchor for type II membrane protein membrane pass occupies residues 17 to 37; it reads YASTITMVIFVALCVFGVWML. The Lumenal portion of the chain corresponds to 38–895; it reads SSNSVIPPQI…KGFWRPETSQ (858 aa). Positions 43–52 are enriched in polar residues; that stretch reads IPPQITQGST. The interval 43-362 is disordered; it reads IPPQITQGST…QRQTSESNTV (320 aa). The segment covering 90 to 114 has biased composition (basic and acidic residues); sequence NPGKLPDDAVKSEDEQRKSAKEKSE. The segment covering 115–127 has biased composition (low complexity); the sequence is TTSSKTQTQETQQ. Over residues 129-143 the composition is skewed to basic and acidic residues; sequence NDDKISEEKEKDNGK. N145 carries N-linked (GlcNAc...) asparagine glycosylation. Positions 154 to 174 are enriched in basic and acidic residues; that stretch reads GQMKKVVKEFEKEQKQQRDED. A compositionally biased stretch (low complexity) spans 176 to 191; that stretch reads GTQPKGTQGQEQGQGK. Polar residues-rich tracts occupy residues 199–232 and 243–256; these read GNKQ…GETS and PEEQ…TGQQ. Residues 257-320 show a composition bias toward basic and acidic residues; sequence NEEKTTASEE…RKDEKKHEQG (64 aa). Residues 337-346 show a composition bias toward polar residues; the sequence is SQKSWKSQAT. N-linked (GlcNAc...) asparagine glycans are attached at residues N375 and N709.

This sequence belongs to the methyltransferase superfamily.

The protein localises to the endoplasmic reticulum membrane. This Arabidopsis thaliana (Mouse-ear cress) protein is Probable methyltransferase PMT27.